The chain runs to 784 residues: Homeobox-leucine zipper protein ROC2 (784 aa).

The tract at residues 60–113 is disordered; it reads AESGDNMIRSRASDPLGGDEFESKSGSENVDGVSVDDQDPNQRPRKKRYHRHTQ. Basic residues predominate over residues 102–113; sequence RPRKKRYHRHTQ. A DNA-binding region (homeobox) is located at residues 104 to 163; sequence RKKRYHRHTQHQIQEMEAFFKECPHPDDKQRKELSRELGLEPLQVKFWFQNKRTQMKNQH. A coiled-coil region spans residues 158–234; the sequence is QMKNQHERHE…DRISAIAAKY (77 aa). The START domain occupies 286 to 523; the sequence is SEVDKPMIVE…LDRQCERLAS (238 aa).

Belongs to the HD-ZIP homeobox family. Class IV subfamily.

It localises to the nucleus. Functionally, probable transcription factor. The polypeptide is Homeobox-leucine zipper protein ROC2 (ROC2) (Oryza sativa subsp. japonica (Rice)).